The primary structure comprises 474 residues: Ubiquinol-cytochrome-c reductase complex core protein 2, mitochondrial (474 aa).

A mitochondrion-targeting transit peptide spans 1–42; the sequence is MKSVVRSKGTQALFRRFSSALGDSINPNQVGVGDNVIRVNGR.

It belongs to the peptidase M16 family. UQCRC2/QCR2 subfamily. Component of the ubiquinol-cytochrome c oxidoreductase (cytochrome b-c1 complex, complex III, CIII), a multisubunit enzyme composed of 3 respiratory subunits cytochrome b, cytochrome c1 and Rieske protein, 2 core protein subunits, and additional low-molecular weight protein subunits. The complex exists as an obligatory dimer and forms supercomplexes (SCs) in the inner mitochondrial membrane with cytochrome c oxidase (complex IV, CIV).

Its subcellular location is the mitochondrion inner membrane. Functionally, component of the ubiquinol-cytochrome c oxidoreductase, a multisubunit transmembrane complex that is part of the mitochondrial electron transport chain which drives oxidative phosphorylation. The respiratory chain contains 3 multisubunit complexes succinate dehydrogenase (complex II, CII), ubiquinol-cytochrome c oxidoreductase (cytochrome b-c1 complex, complex III, CIII) and cytochrome c oxidase (complex IV, CIV), that cooperate to transfer electrons derived from NADH and succinate to molecular oxygen, creating an electrochemical gradient over the inner membrane that drives transmembrane transport and the ATP synthase. The cytochrome b-c1 complex catalyzes electron transfer from ubiquinol to cytochrome c, linking this redox reaction to translocation of protons across the mitochondrial inner membrane, with protons being carried across the membrane as hydrogens on the quinol. In the process called Q cycle, 2 protons are consumed from the matrix, 4 protons are released into the intermembrane space and 2 electrons are passed to cytochrome c. In Euglena gracilis, this protein is Ubiquinol-cytochrome-c reductase complex core protein 2, mitochondrial.